Consider the following 432-residue polypeptide: Adenylosuccinate synthetase (432 aa).

Residues 13–19 (GDEGKGK) and 41–43 (GHT) each bind GTP. Aspartate 14 serves as the catalytic Proton acceptor. 2 residues coordinate Mg(2+): aspartate 14 and glycine 41. Residues 14 to 17 (DEGK), 39 to 42 (NAGH), threonine 130, arginine 144, glutamine 225, threonine 240, and arginine 304 contribute to the IMP site. Histidine 42 functions as the Proton donor in the catalytic mechanism. Position 300–306 (300–306 (AVTGRPR)) interacts with substrate. GTP-binding positions include arginine 306, 332 to 334 (KLD), and 415 to 417 (STG).

Belongs to the adenylosuccinate synthetase family. In terms of assembly, homodimer. Mg(2+) is required as a cofactor.

The protein localises to the cytoplasm. The enzyme catalyses IMP + L-aspartate + GTP = N(6)-(1,2-dicarboxyethyl)-AMP + GDP + phosphate + 2 H(+). It participates in purine metabolism; AMP biosynthesis via de novo pathway; AMP from IMP: step 1/2. Plays an important role in the de novo pathway of purine nucleotide biosynthesis. Catalyzes the first committed step in the biosynthesis of AMP from IMP. The sequence is that of Adenylosuccinate synthetase from Actinobacillus succinogenes (strain ATCC 55618 / DSM 22257 / CCUG 43843 / 130Z).